A 325-amino-acid chain; its full sequence is Undecaprenyl-phosphate 4-deoxy-4-formamido-L-arabinose transferase (325 aa).

The next 2 membrane-spanning stretches (helical) occupy residues 236 to 256 and 270 to 290; these read LSIF…LLIL and VFTL…GMGL.

The protein belongs to the glycosyltransferase 2 family.

It is found in the cell inner membrane. It carries out the reaction UDP-4-deoxy-4-formamido-beta-L-arabinose + di-trans,octa-cis-undecaprenyl phosphate = 4-deoxy-4-formamido-alpha-L-arabinopyranosyl di-trans,octa-cis-undecaprenyl phosphate + UDP. It functions in the pathway glycolipid biosynthesis; 4-amino-4-deoxy-alpha-L-arabinose undecaprenyl phosphate biosynthesis; 4-amino-4-deoxy-alpha-L-arabinose undecaprenyl phosphate from UDP-4-deoxy-4-formamido-beta-L-arabinose and undecaprenyl phosphate: step 1/2. Its pathway is bacterial outer membrane biogenesis; lipopolysaccharide biosynthesis. Its function is as follows. Catalyzes the transfer of 4-deoxy-4-formamido-L-arabinose from UDP to undecaprenyl phosphate. The modified arabinose is attached to lipid A and is required for resistance to polymyxin and cationic antimicrobial peptides. The sequence is that of Undecaprenyl-phosphate 4-deoxy-4-formamido-L-arabinose transferase from Edwardsiella ictaluri (strain 93-146).